The primary structure comprises 150 residues: Lipoprotein signal peptidase (150 aa).

Helical transmembrane passes span Val59–Pro79 and Leu84–Ile101. Catalysis depends on residues Asp111 and Asp125. The helical transmembrane segment at Ile117–Trp137 threads the bilayer.

The protein belongs to the peptidase A8 family.

The protein localises to the cell membrane. It carries out the reaction Release of signal peptides from bacterial membrane prolipoproteins. Hydrolyzes -Xaa-Yaa-Zaa-|-(S,diacylglyceryl)Cys-, in which Xaa is hydrophobic (preferably Leu), and Yaa (Ala or Ser) and Zaa (Gly or Ala) have small, neutral side chains.. The protein operates within protein modification; lipoprotein biosynthesis (signal peptide cleavage). Its function is as follows. This protein specifically catalyzes the removal of signal peptides from prolipoproteins. This Moorella thermoacetica (strain ATCC 39073 / JCM 9320) protein is Lipoprotein signal peptidase.